The following is a 226-amino-acid chain: MRHFVVFLYMFLALSIPTAFAKKHIVTKKGNHQDITNDNEGENAEKKSATVAGAVIAGGELALKILTKILYEIGKIDRKIAIGVDNESGLKWTALNTYYKSGASDVTLPYEVENSKALLYTARKSKGPVARGAVGVLAYKMSSGNTLAVMFSVPFDYNLYSNWWNVKIYDGEKKADEKMYNELYNNNNPIKPSTWEKRDLGKDGLKLRGFMTSNGDAKLVIHIEKS.

The N-terminal stretch at 1 to 21 (MRHFVVFLYMFLALSIPTAFA) is a signal peptide. Positions 22-45 (KKHIVTKKGNHQDITNDNEGENAE) are excised as a propeptide. Residues 50 to 59 (TVAGAVIAGG) are plays an important role in the hemolytic activity. The segment at 58-77 (GGELALKILTKILYEIGKID) is N-terminal region. The phosphocholine site is built by Ser-101, Val-134, Ser-152, Pro-154, Tyr-180, and Tyr-184. The tract at residues 152–167 (SVPFDYNLYSNWWNVK) is trp-rich region, which is important for the binding to lipid membrane.

It belongs to the actinoporin family. Sea anemone subfamily. In terms of assembly, octamer or nonamer in membranes. Monomer in the soluble state.

The protein localises to the secreted. The protein resides in the nematocyst. Its subcellular location is the target cell membrane. Functionally, pore-forming protein that forms cations-selective hydrophilic pores of around 1 nm and causes cytolysis. Pore formation is a multi-step process that involves specific recognition of membrane sphingomyelin (but neither cholesterol nor phosphatidylcholine) using aromatic rich region and adjacent phosphocholine (POC) binding site, firm binding to the membrane (mainly driven by hydrophobic interactions) accompanied by the transfer of the N-terminal region to the lipid-water interface and finally pore formation after oligomerization of monomers. The protein is DELTA-alicitoxin-Pse1b of Phyllodiscus semoni (Night anemone).